Reading from the N-terminus, the 305-residue chain is Cbb3-type cytochrome c oxidase subunit CcoP2 (305 aa).

2 helical membrane passes run 4 to 24 (FWSW…VWLL) and 57 to 77 (WWFM…VLYP). Cytochrome c domains are found at residues 130 to 209 (QALK…RSLS) and 219 to 300 (VDIE…YSLS). Positions 143, 146, 147, 186, 232, 235, 236, and 277 each coordinate heme c.

In terms of assembly, component of the cbb3-type cytochrome c oxidase at least composed of CcoN, CcoO, CcoQ and CcoP. It depends on heme c as a cofactor.

It localises to the cell inner membrane. It participates in energy metabolism; oxidative phosphorylation. In terms of biological role, C-type cytochrome. Part of the cbb3-type cytochrome c oxidase complex. CcoP subunit is required for transferring electrons from donor cytochrome c via its heme groups to CcoO subunit. From there, electrons are shuttled to the catalytic binuclear center of CcoN subunit where oxygen reduction takes place. The complex also functions as a proton pump. The polypeptide is Cbb3-type cytochrome c oxidase subunit CcoP2 (Stutzerimonas stutzeri (Pseudomonas stutzeri)).